The following is a 202-amino-acid chain: Mitochondrial import receptor subunit TOM20-3 (202 aa).

An N-acetylmethionine modification is found at Met1. Over 1-174 the chain is Cytoplasmic; it reads MDTETEFDRI…NKKSSDAKYD (174 aa). TPR repeat units lie at residues 38–74 and 86–119; these read GGVL…DPKK and TSFA…QPDN. A disordered region spans residues 146–166; the sequence is SQPMGRVEAPAPPSSKAVKNK. A helical membrane pass occupies residues 175–192; sequence AMGWVILAIGVVAWISFA. The Mitochondrial intermembrane portion of the chain corresponds to 193-202; that stretch reads KANVPVSPPR.

Belongs to the Tom20 family. Forms part of the preprotein translocase complex of the outer mitochondrial membrane (TOM complex) which consists of at least 6 different proteins (TOM5, TOM6, TOM7, TOM20, TOM22/TOM9 and TOM40). Component of a mitochondrial large protein complex that contains, at least, MIC60, DGS1, TOM40, TOM20 proteins, and petC/RISP. The N-terminus is blocked. Expressed in roots, flowers, young cotyledons and leaves.

Its subcellular location is the mitochondrion outer membrane. Its function is as follows. Central component of the receptor complex responsible for the recognition and translocation of cytosolically synthesized mitochondrial preproteins. Together with TOM22 functions as the transit peptide receptor at the surface of the mitochondrion outer membrane and facilitates the movement of preproteins into the translocation pore. The sequence is that of Mitochondrial import receptor subunit TOM20-3 from Arabidopsis thaliana (Mouse-ear cress).